We begin with the raw amino-acid sequence, 153 residues long: Prostaglandin E synthase (153 aa).

The Lumenal portion of the chain corresponds to Met1–Ala13. The chain crosses the membrane as a helical span at residues Leu14–Lys42. A glutathione-binding site is contributed by Arg39. At Lys43–Arg61 the chain is on the cytoplasmic side. The helical transmembrane segment at Asp62–Ser91 threads the bilayer. Arg74–Glu78 contacts glutathione. The Lumenal portion of the chain corresponds to Phe92–Asp96. The chain crosses the membrane as a helical span at residues Pro97–Gly120. His114 and Tyr118 together coordinate glutathione. Topologically, residues Lys121–Ala124 are cytoplasmic. A helical membrane pass occupies residues Pro125–Leu153. Arg127–Tyr131 is a binding site for glutathione.

This sequence belongs to the MAPEG family. Homotrimer. Glutathione serves as cofactor.

It is found in the membrane. The protein localises to the cytoplasm. The protein resides in the perinuclear region. It carries out the reaction prostaglandin H2 = prostaglandin E2. It catalyses the reaction 2-glyceryl-prostaglandin H2 = 2-glyceryl-prostaglandin E2. The enzyme catalyses prostaglandin G2 = (15S)-15-hydroperoxy-prostaglandin E2. The catalysed reaction is 1-chloro-2,4-dinitrobenzene + glutathione = 2,4-dinitrophenyl-S-glutathione + chloride + H(+). It carries out the reaction (5S)-hydroperoxy-(6E,8Z,11Z,14Z)-eicosatetraenoate + 2 glutathione = (5S)-hydroxy-(6E,8Z,11Z,14Z)-eicosatetraenoate + glutathione disulfide + H2O. The protein operates within lipid metabolism; prostaglandin biosynthesis. Its function is as follows. Terminal enzyme of the cyclooxygenase (COX)-2-mediated prostaglandin E2 (PGE2) biosynthetic pathway. Catalyzes the glutathione-dependent oxidoreduction of prostaglandin endoperoxide H2 (PGH2) to prostaglandin E2 (PGE2) in response to inflammatory stimuli. Plays a key role in inflammation response, fever and pain. Also catalyzes the oxidoreduction of endocannabinoids into prostaglandin glycerol esters and PGG2 into 15-hydroperoxy-PGE2. In addition, displays low glutathione transferase and glutathione-dependent peroxidase activities, toward 1-chloro-2,4-dinitrobenzene and 5-hydroperoxyicosatetraenoic acid (5-HPETE), respectively. The sequence is that of Prostaglandin E synthase (PTGES) from Equus caballus (Horse).